A 399-amino-acid polypeptide reads, in one-letter code: MTEISDILLRTILDSRGNPTVEAEISTISGGFGRACAPSGASTGIYEAKVRPCDEAVADAYINLIPKLIELDSADQRGFDDTLHEVDGTSDLSGIGANIAVALSLANAKAAASTLNMELYQYLGGAFISQTPLPLGNVIGGGAHAVDATDIQEFLIVPTGASTAAEAVFTNALVHKRIKEILIARGKGCGKGDEGGWAPHIADLEAFEIVNEATTKVFDETGIEVRMGLDVAASEMWDAASGRYVYKNAKRTTEEQIAYIADLTEKYNLIYVEDPIQEEDFEGFARITEEVSGRDTLICGDDLFVTNASRLEEGIRNDACNCVLIKPNQIGTLTDTFETISLAHDYGYETVMSHRSGETTDNTIAHLATAFGCCFMKSGVVGGERIAKLNELIRIEEHF.

Q152 contacts (2R)-2-phosphoglycerate. The active-site Proton donor is E194. D230, E273, and D301 together coordinate Mg(2+). (2R)-2-phosphoglycerate-binding residues include K326, R355, S356, and K377. The active-site Proton acceptor is K326.

This sequence belongs to the enolase family. Mg(2+) serves as cofactor.

Its subcellular location is the cytoplasm. The protein resides in the secreted. It localises to the cell surface. The enzyme catalyses (2R)-2-phosphoglycerate = phosphoenolpyruvate + H2O. It participates in carbohydrate degradation; glycolysis; pyruvate from D-glyceraldehyde 3-phosphate: step 4/5. Catalyzes the reversible conversion of 2-phosphoglycerate (2-PG) into phosphoenolpyruvate (PEP). It is essential for the degradation of carbohydrates via glycolysis. This chain is Enolase, found in Methanocorpusculum labreanum (strain ATCC 43576 / DSM 4855 / Z).